A 3390-amino-acid polypeptide reads, in one-letter code: Genome polyprotein (3390 aa).

Positions 1-15 are interaction with host EXOC1; sequence MNNQRKKTGKPSINM. The Cytoplasmic segment spans residues 1 to 100; it reads MNNQRKKTGK…MLSIINKRKK (100 aa). The tract at residues 37-72 is hydrophobic; homodimerization of capsid protein C; the sequence is LLNGQGPMKLVMAFIAFLRFLAIPPTAGVLARWGTF. The propeptide at 101–114 is ER anchor for the capsid protein C, removed in mature form by serine protease NS3; it reads TSLCLMMMLPATLA. A helical membrane pass occupies residues 101-118; that stretch reads TSLCLMMMLPATLAFHLT. Topologically, residues 119–243 are extracellular; the sequence is SRDGEPRMIV…VEKVETWALR (125 aa). Residue Asn183 is glycosylated (N-linked (GlcNAc...) asparagine; by host). Residues 244–264 form a helical membrane-spanning segment; the sequence is HPGFTILALFLAHYIGTSLTQ. Position 265 (Lys265) is a topological domain, cytoplasmic. The chain crosses the membrane as a helical span at residues 266–280; that stretch reads VVIFILLMLVTPSMT. The Extracellular segment spans residues 281-723; the sequence is MRCVGVGNRD…VHQIFGSAYT (443 aa). 4 disulfide bridges follow: Cys283/Cys310, Cys340/Cys401, Cys354/Cys385, and Cys372/Cys396. An N-linked (GlcNAc...) asparagine; by host glycan is attached at Asn347. Residues 378-391 are fusion peptide; it reads DRGWGNGCGLFGKG. N-linked (GlcNAc...) asparagine; by host glycosylation is present at Asn433. 2 cysteine pairs are disulfide-bonded: Cys463-Cys563 and Cys580-Cys611. Residues 724–744 traverse the membrane as a helical segment; sequence ALFSGVSWIMKIGIGVLLTWI. Topologically, residues 745-750 are cytoplasmic; it reads GLNSKN. A helical membrane pass occupies residues 751–771; it reads TSMSFSCIAIGIITLYLGVVV. Residues 772–1193 lie on the Extracellular side of the membrane; that stretch reads QADMGCVINW…MIGSNASDRM (422 aa). 6 cysteine pairs are disulfide-bonded: Cys777/Cys788, Cys828/Cys916, Cys952/Cys996, Cys1053/Cys1102, Cys1064/Cys1086, and Cys1085/Cys1089. Residues Asn903 and Asn980 are each glycosylated (N-linked (GlcNAc...) asparagine; by host). N-linked (GlcNAc...) asparagine; by host glycans are attached at residues Asn1132 and Asn1188. Residues 1194–1218 form a helical membrane-spanning segment; the sequence is GMGVTYLALIATFKIQPFLALGFFL. Residues 1219–1224 are Cytoplasmic-facing; the sequence is RKLTSR. A helical membrane pass occupies residues 1225 to 1243; sequence ENLLLGVGLAMAATLRLPE. Over 1244–1267 the chain is Lumenal; sequence DIEQMANGIALGLMALKLITQFET. A helical membrane pass occupies residues 1268 to 1288; the sequence is YQLWTALVSLTCSNTIFTLTV. Ala1289 is a topological domain (cytoplasmic). Residues 1290–1308 traverse the membrane as a helical segment; sequence WRTATLILAGISLLPVCQS. The Lumenal segment spans residues 1309-1315; the sequence is SSMRKTD. A helical membrane pass occupies residues 1316 to 1336; the sequence is WLPMTVAAMGVPPLPLFIFSL. Residues 1337–1344 lie on the Cytoplasmic side of the membrane; that stretch reads KDTLKRRS. Residues 1345–1365 traverse the membrane as a helical segment; it reads WPLNEGVMAVGLVSILASSLL. The Lumenal segment spans residues 1366–1368; the sequence is RND. Residues 1369–1389 form a helical membrane-spanning segment; it reads VPMAGPLVAGGLLIACYVITG. Over 1390–1443 the chain is Cytoplasmic; that stretch reads TSADLTVEKAADVTWEEEAEQTGVSHNLMITVDDDGTMRIKDDETENILTVLLK. The segment at 1396-1435 is interacts with and activates NS3 protease; sequence VEKAADVTWEEEAEQTGVSHNLMITVDDDGTMRIKDDETE. Positions 1444-1464 form an intramembrane region, helical; it reads TALLIVSGIFPCSIPATLLVW. The Cytoplasmic segment spans residues 1465–2146; the sequence is HTWQKQTQRS…VEELPETMET (682 aa). Positions 1474 to 1651 constitute a Peptidase S7 domain; sequence SGVLWDVPSP…NAEPDGPTPE (178 aa). Residues His1524, Asp1548, and Ser1608 each act as charge relay system; for serine protease NS3 activity in the active site. One can recognise a Helicase ATP-binding domain in the interval 1654-1810; sequence EEMFKKRNLT…QSNAPIQDEE (157 aa). Positions 1658 to 1661 are important for RNA-binding; the sequence is KKRN. 1667–1674 is an ATP binding site; that stretch reads LHPGSGKT. Positions 1758–1761 match the DEAH box motif; it reads DEAH. The 166-residue stretch at 1821–1986 folds into the Helicase C-terminal domain; the sequence is GNEWITDFVG…GIIPALFEPE (166 aa). Lys1862 bears the N6-acetyllysine; by host mark. A helical membrane pass occupies residues 2147–2167; it reads LLLLGLMILLTGGAMLFLISG. The Lumenal segment spans residues 2168–2169; sequence KG. Residues 2170–2190 constitute an intramembrane region (helical); sequence IGKTSIGLICVIASSGMLWMA. Residue Asp2191 is a topological domain, lumenal. A helical transmembrane segment spans residues 2192–2212; it reads VPLQWIASAIVLEFFMMVLLI. Topologically, residues 2213–2227 are cytoplasmic; it reads PEPEKQRTPQDNQLA. Residues 2228–2248 traverse the membrane as a helical segment; it reads YVVIGILTLAAIVAANEMGLL. At 2249 to 2273 the chain is on the lumenal side; it reads ETTKRDLGMSKEPGVVSPTSYLDVD. The segment at residues 2274–2294 is an intramembrane region (helical); sequence LHPASAWTLYAVATTVITPML. Residues 2295-2305 lie on the Lumenal side of the membrane; sequence RHTIENSTANV. 2 N-linked (GlcNAc...) asparagine; by host glycosylation sites follow: Asn2300 and Asn2304. Positions 2306 to 2326 form an intramembrane region, helical; it reads SLAAIANQAVVLMGLDKGWPI. Residues 2327–2346 are Lumenal-facing; that stretch reads SKMDLGVPLLALGCYSQVNP. The chain crosses the membrane as a helical span at residues 2347–2367; it reads LTLIAAVLLLVTHYAIIGPGL. Residues 2368 to 2412 are Cytoplasmic-facing; the sequence is QAKATREAQKRTAAGIMKNPTVDGIMTIDLDPVIYDSKFEKQLGQ. The helical transmembrane segment at 2413–2433 threads the bilayer; the sequence is VMLLVLCAVQLLLMRTSWALC. At 2434–2458 the chain is on the lumenal side; it reads EVLTLATGPITTLWEGSPGKFWNTT. Asn2456 carries an N-linked (GlcNAc...) asparagine; by host glycan. A helical transmembrane segment spans residues 2459-2479; the sequence is IAVSMANIFRGSYLAGAGLAF. The Cytoplasmic segment spans residues 2480-3390; that stretch reads SIMKSVGTGK…KEEESEGAIW (911 aa). In terms of domain architecture, mRNA cap 0-1 NS5-type MT spans 2492 to 2753; that stretch reads TGSQGETLGE…DVDLGAGTRH (262 aa). S-adenosyl-L-methionine is bound at residue Ser2546. Ser2546 is subject to Phosphoserine. Lys2551 acts as the For 2'-O-MTase activity in catalysis. The SUMO-interacting motif signature appears at 2567-2570; that stretch reads VIDL. S-adenosyl-L-methionine is bound by residues Gly2576, Trp2577, Thr2594, Lys2595, Asp2621, and Val2622. Asp2636 acts as the For 2'-O-MTase activity in catalysis. Ile2637 serves as a coordination point for S-adenosyl-L-methionine. Residues Lys2670 and Glu2706 each act as for 2'-O-MTase activity in the active site. Tyr2708 serves as a coordination point for S-adenosyl-L-methionine. Zn(2+)-binding residues include Glu2927, His2931, Cys2936, and Cys2939. In terms of domain architecture, RdRp catalytic spans 3018 to 3168; that stretch reads AMYADDTAGW…PIDDRFANAL (151 aa). Zn(2+) contacts are provided by His3202, Cys3218, and Cys3337.

It in the N-terminal section; belongs to the class I-like SAM-binding methyltransferase superfamily. mRNA cap 0-1 NS5-type methyltransferase family. As to quaternary structure, homodimer. Interacts (via N-terminus) with host EXOC1 (via C-terminus); this interaction results in EXOC1 degradation through the proteasome degradation pathway. In terms of assembly, forms heterodimers with envelope protein E in the endoplasmic reticulum and Golgi. Homodimer; in the endoplasmic reticulum and Golgi. Interacts with protein prM. Interacts with non-structural protein 1. As to quaternary structure, homodimer; Homohexamer when secreted. Interacts with envelope protein E. In terms of assembly, interacts (via N-terminus) with serine protease NS3. Forms a heterodimer with serine protease NS3. May form homooligomers. As to quaternary structure, forms a heterodimer with NS2B. Interacts with NS4B. Interacts with unphosphorylated RNA-directed RNA polymerase NS5; this interaction stimulates RNA-directed RNA polymerase NS5 guanylyltransferase activity. In terms of assembly, interacts with host MAVS; this interaction inhibits the synthesis of IFN-beta. Interacts with host AUP1; the interaction occurs in the presence of Dengue virus NS4B and induces lipophagy which facilitates production of virus progeny particles. Interacts with serine protease NS3. As to quaternary structure, homodimer. Interacts with host STAT2; this interaction inhibits the phosphorylation of the latter, and, when all viral proteins are present (polyprotein), targets STAT2 for degradation. Interacts with serine protease NS3. In terms of processing, specific enzymatic cleavages in vivo yield mature proteins. Cleavages in the lumen of endoplasmic reticulum are performed by host signal peptidase, whereas cleavages in the cytoplasmic side are performed by serine protease NS3. Signal cleavage at the 2K-4B site requires a prior NS3 protease-mediated cleavage at the 4A-2K site. Cleaved in post-Golgi vesicles by a host furin, releasing the mature small envelope protein M, and peptide pr. This cleavage is incomplete as up to 30% of viral particles still carry uncleaved prM. Post-translationally, N-glycosylated. In terms of processing, N-glycosylated. The excreted form is glycosylated and this is required for efficient secretion of the protein from infected cells. Acetylated by host KAT5. Acetylation modulates NS3 RNA-binding and unwinding activities and plays an important positive role for viral replication. Post-translationally, sumoylation of RNA-directed RNA polymerase NS5 increases NS5 protein stability allowing proper viral RNA replication. In terms of processing, phosphorylated on serines residues. This phosphorylation may trigger NS5 nuclear localization.

It localises to the virion. The protein resides in the host nucleus. Its subcellular location is the host cytoplasm. The protein localises to the host perinuclear region. It is found in the secreted. It localises to the virion membrane. The protein resides in the host endoplasmic reticulum membrane. Its subcellular location is the host mitochondrion. The enzyme catalyses Selective hydrolysis of -Xaa-Xaa-|-Yaa- bonds in which each of the Xaa can be either Arg or Lys and Yaa can be either Ser or Ala.. It catalyses the reaction RNA(n) + a ribonucleoside 5'-triphosphate = RNA(n+1) + diphosphate. The catalysed reaction is a ribonucleoside 5'-triphosphate + H2O = a ribonucleoside 5'-diphosphate + phosphate + H(+). It carries out the reaction ATP + H2O = ADP + phosphate + H(+). The enzyme catalyses a 5'-end (5'-triphosphoguanosine)-ribonucleoside in mRNA + S-adenosyl-L-methionine = a 5'-end (N(7)-methyl 5'-triphosphoguanosine)-ribonucleoside in mRNA + S-adenosyl-L-homocysteine. It catalyses the reaction a 5'-end (N(7)-methyl 5'-triphosphoguanosine)-ribonucleoside in mRNA + S-adenosyl-L-methionine = a 5'-end (N(7)-methyl 5'-triphosphoguanosine)-(2'-O-methyl-ribonucleoside) in mRNA + S-adenosyl-L-homocysteine + H(+). Its function is as follows. Plays a role in virus budding by binding to the cell membrane and gathering the viral RNA into a nucleocapsid that forms the core of a mature virus particle. During virus entry, may induce genome penetration into the host cytoplasm after hemifusion induced by the surface proteins. Can migrate to the cell nucleus where it modulates host functions. Overcomes the anti-viral effects of host EXOC1 by sequestering and degrading the latter through the proteasome degradation pathway. Functionally, inhibits RNA silencing by interfering with host Dicer. In terms of biological role, prevents premature fusion activity of envelope proteins in trans-Golgi by binding to envelope protein E at pH6.0. After virion release in extracellular space, gets dissociated from E dimers. Acts as a chaperone for envelope protein E during intracellular virion assembly by masking and inactivating envelope protein E fusion peptide. prM is the only viral peptide matured by host furin in the trans-Golgi network probably to avoid catastrophic activation of the viral fusion activity in acidic Golgi compartment prior to virion release. prM-E cleavage is inefficient, and many virions are only partially matured. These uncleaved prM would play a role in immune evasion. Its function is as follows. May play a role in virus budding. Exerts cytotoxic effects by activating a mitochondrial apoptotic pathway through M ectodomain. May display a viroporin activity. Functionally, binds to host cell surface receptor and mediates fusion between viral and cellular membranes. Envelope protein is synthesized in the endoplasmic reticulum in the form of heterodimer with protein prM. They play a role in virion budding in the ER, and the newly formed immature particle is covered with 60 spikes composed of heterodimer between precursor prM and envelope protein E. The virion is transported to the Golgi apparatus where the low pH causes dissociation of PrM-E heterodimers and formation of E homodimers. prM-E cleavage is inefficient, and many virions are only partially matured. These uncleaved prM would play a role in immune evasion. In terms of biological role, involved in immune evasion, pathogenesis and viral replication. Once cleaved off the polyprotein, is targeted to three destinations: the viral replication cycle, the plasma membrane and the extracellular compartment. Essential for viral replication. Required for formation of the replication complex and recruitment of other non-structural proteins to the ER-derived membrane structures. Excreted as a hexameric lipoparticle that plays a role against host immune response. Antagonizing the complement function. Binds to the host macrophages and dendritic cells. Inhibits signal transduction originating from Toll-like receptor 3 (TLR3). Disrupts the host endothelial glycocalyx layer of host pulmonary microvascular endothelial cells, inducing degradation of sialic acid and shedding of heparan sulfate proteoglycans. NS1 induces expression of sialidases, heparanase, and activates cathepsin L, which activates heparanase via enzymatic cleavage. These effects are probably linked to the endothelial hyperpermeability observed in severe dengue disease. Its function is as follows. Component of the viral RNA replication complex that functions in virion assembly and antagonizes the host immune response. Functionally, required cofactor for the serine protease function of NS3. May have membrane-destabilizing activity and form viroporins. In terms of biological role, displays three enzymatic activities: serine protease, NTPase and RNA helicase. NS3 serine protease, in association with NS2B, performs its autocleavage and cleaves the polyprotein at dibasic sites in the cytoplasm: C-prM, NS2A-NS2B, NS2B-NS3, NS3-NS4A, NS4A-2K and NS4B-NS5. NS3 RNA helicase binds RNA and unwinds dsRNA in the 3' to 5' direction. Regulates the ATPase activity of the NS3 helicase activity. NS4A allows NS3 helicase to conserve energy during unwinding. Plays a role in the inhibition of the host innate immune response. Interacts with host MAVS and thereby prevents the interaction between RIGI and MAVS. In turn, IFN-beta production is impaired. Interacts with host AUP1 which mediates induction of lipophagy in host cells and facilitates production of virus progeny particles. Its function is as follows. Functions as a signal peptide for NS4B and is required for the interferon antagonism activity of the latter. Functionally, induces the formation of ER-derived membrane vesicles where the viral replication takes place. Inhibits interferon (IFN)-induced host STAT1 phosphorylation and nuclear translocation, thereby preventing the establishment of cellular antiviral state by blocking the IFN-alpha/beta pathway. In terms of biological role, replicates the viral (+) and (-) RNA genome, and performs the capping of genomes in the cytoplasm. NS5 methylates viral RNA cap at guanine N-7 and ribose 2'-O positions. Besides its role in RNA genome replication, also prevents the establishment of cellular antiviral state by blocking the interferon-alpha/beta (IFN-alpha/beta) signaling pathway. Inhibits host TYK2 and STAT2 phosphorylation, thereby preventing activation of JAK-STAT signaling pathway. This chain is Genome polyprotein, found in Dengue virus type 3 (strain China/80-2/1980) (DENV-3).